The following is a 242-amino-acid chain: Protein CDV3 homolog B (242 aa).

Positions 1–15 (MAEPEERSLDDFFAK) are enriched in basic and acidic residues. The interval 1 to 242 (MAEPEERSLD…DNQYAVLGEQ (242 aa)) is disordered. Ala2 carries the N-acetylalanine modification. Residues 30–57 (AAGSRGPARPSDGATSSSLSSYVSAAGK) are compositionally biased toward low complexity. A compositionally biased stretch (basic and acidic residues) spans 59–75 (VKKEKSGKSENPDQLQE). A compositionally biased stretch (acidic residues) spans 105-122 (KEDDENENKEEQGADWEE). Composition is skewed to polar residues over residues 129–143 (DKSS…QAQA) and 183–194 (SDTQFPSPQATA). The span at 195-213 (KHTESRREKEMEKTFEIVK) shows a compositional bias: basic and acidic residues.

This sequence belongs to the CDV3 family.

Its subcellular location is the cytoplasm. This Xenopus laevis (African clawed frog) protein is Protein CDV3 homolog B (cdv3-b).